A 316-amino-acid polypeptide reads, in one-letter code: HPr kinase/phosphorylase (316 aa).

Residues histidine 143 and lysine 164 contribute to the active site. 158–165 (GEAGSGKS) contributes to the ATP binding site. Serine 165 contacts Mg(2+). Catalysis depends on aspartate 182, which acts as the Proton acceptor; for phosphorylation activity. Proton donor; for dephosphorylation activity. The tract at residues 206–215 (LEVRGLGVLN) is important for the catalytic mechanism of both phosphorylation and dephosphorylation. Glutamate 207 provides a ligand contact to Mg(2+). Residue arginine 251 is part of the active site. Residues 272-277 (PVMPGR) are important for the catalytic mechanism of dephosphorylation.

The protein belongs to the HPrK/P family. Homohexamer. Mg(2+) is required as a cofactor.

The enzyme catalyses [HPr protein]-L-serine + ATP = [HPr protein]-O-phospho-L-serine + ADP + H(+). It catalyses the reaction [HPr protein]-O-phospho-L-serine + phosphate + H(+) = [HPr protein]-L-serine + diphosphate. In terms of biological role, catalyzes the ATP- as well as the pyrophosphate-dependent phosphorylation of a specific serine residue in HPr, a phosphocarrier protein of the phosphoenolpyruvate-dependent sugar phosphotransferase system (PTS). HprK/P also catalyzes the pyrophosphate-producing, inorganic phosphate-dependent dephosphorylation (phosphorolysis) of seryl-phosphorylated HPr (P-Ser-HPr). This chain is HPr kinase/phosphorylase, found in Stenotrophomonas maltophilia (strain K279a).